The primary structure comprises 70 residues: MLKQIFIGLVVFYQRFISPLKAPSCRFYPTCSHYSLQALEKYGPVKGLWLTAARVLKCHPFHPGGYDPVK.

The protein belongs to the UPF0161 family.

It localises to the cell inner membrane. Could be involved in insertion of integral membrane proteins into the membrane. The polypeptide is Putative membrane protein insertion efficiency factor (Geobacter sp. (strain M21)).